A 111-amino-acid chain; its full sequence is Irditoxin subunit B (111 aa).

Positions 1 to 19 (MKTLLLAVAVVAFVCLGSA) are cleaved as a signal peptide. Residues 20-34 (DQLGLGRQQIDWGKG) constitute a propeptide that is removed on maturation. Glutamine 35 bears the Pyrrolidone carboxylic acid mark. 5 disulfides stabilise this stretch: cysteine 44–cysteine 68, cysteine 47–cysteine 55, cysteine 61–cysteine 87, cysteine 91–cysteine 102, and cysteine 103–cysteine 108.

Belongs to the three-finger toxin family. Ancestral subfamily. Boigatoxin sub-subfamily. As to quaternary structure, heterodimer of A and B chains; disulfide-linked. As to expression, expressed by the venom gland.

The protein localises to the secreted. In terms of biological role, this bird and reptile-specific postsynaptic neurotoxin inhibits the chick muscle alpha-1-beta-1-gamma-delta (CHRNA1-CHRNB1-CHRNG-CHRND) nicotinic acetylcholine receptor (nAChR) 100-fold more compared with the mouse receptor. In vivo, produces rapid flaccid paralysis, dyspnea and increased respiratory rate in geckos. At sublethal doses geckos were immobilized for up to three days and then recovered. Chicks injected with lethal doses showed rapid onset of inactivity, dyspnea and neck droop, and no extended paralysis with survival was seen. In Boiga irregularis (Brown tree snake), this protein is Irditoxin subunit B.